The sequence spans 179 residues: Ribosome maturation factor RimM (179 aa).

One can recognise a PRC barrel domain in the interval 103–176 (EPDTYYDHQL…IVEIDPPKGL (74 aa)).

It belongs to the RimM family. Binds ribosomal protein uS19.

It localises to the cytoplasm. Its function is as follows. An accessory protein needed during the final step in the assembly of 30S ribosomal subunit, possibly for assembly of the head region. Essential for efficient processing of 16S rRNA. May be needed both before and after RbfA during the maturation of 16S rRNA. It has affinity for free ribosomal 30S subunits but not for 70S ribosomes. This is Ribosome maturation factor RimM from Mycobacterium leprae (strain Br4923).